We begin with the raw amino-acid sequence, 65 residues long: Large ribosomal subunit protein bL31 (65 aa).

Positions 16, 18, 36, and 39 each coordinate Zn(2+).

The protein belongs to the bacterial ribosomal protein bL31 family. Type A subfamily. In terms of assembly, part of the 50S ribosomal subunit. The cofactor is Zn(2+).

Binds the 23S rRNA. The chain is Large ribosomal subunit protein bL31 from Geotalea uraniireducens (strain Rf4) (Geobacter uraniireducens).